The primary structure comprises 928 residues: Zinc metalloproteinase nas-39 (928 aa).

Positions 1–30 (MRFSANIAIIVNIIFLFIVVEFVLPTFIRS) are cleaved as a signal peptide. Positions 48 to 247 (AATAKKERIW…RQTKKLYKCA (200 aa)) constitute a Peptidase M12A domain. N-linked (GlcNAc...) asparagine glycans are attached at residues Asn-69 and Asn-87. 4 disulfide bridges follow: Cys-90/Cys-246, Cys-111/Cys-133, Cys-113/Cys-114, and Cys-249/Cys-268. Zn(2+) is bound at residue His-141. The active site involves Glu-142. Positions 145 and 151 each coordinate Zn(2+). CUB domains are found at residues 249–359 (CGGT…YAIC) and 360–476 (GGPI…FTKE). N-linked (GlcNAc...) asparagine glycosylation occurs at Asn-283. 6 cysteine pairs are disulfide-bonded: Cys-359–Cys-385, Cys-412–Cys-439, Cys-480–Cys-491, Cys-487–Cys-500, Cys-502–Cys-515, and Cys-519–Cys-545. One can recognise an EGF-like 1; calcium-binding domain in the interval 477–516 (LNECATDKNICHHYCVNTVGGFKCACRVGYSLSSNGFSCD). The region spanning 519-625 (CGGYLKASNG…DGFFANFIAD (107 aa)) is the CUB 3 domain. Residues Asn-527 and Asn-560 are each glycosylated (N-linked (GlcNAc...) asparagine). Intrachain disulfides connect Cys-573–Cys-587, Cys-629–Cys-640, Cys-636–Cys-649, Cys-651–Cys-664, Cys-669–Cys-695, Cys-722–Cys-744, Cys-782–Cys-812, and Cys-840–Cys-863. The EGF-like 2; calcium-binding domain maps to 626-665 (FDECQNDNAGCEHTCQNRLGSYVCTCNPGYILAEDKHNCK). 2 CUB domains span residues 669–781 (CFFE…YTSL) and 782–900 (CGGR…YREA). Asn-694 carries an N-linked (GlcNAc...) asparagine glycan. Positions 895–928 (AEYREAPRSSSTKRTFVSKTRHSPLEEPIHDRNE) are disordered. Positions 902-912 (RSSSTKRTFVS) are enriched in polar residues. Over residues 917–928 (SPLEEPIHDRNE) the composition is skewed to basic and acidic residues.

Zn(2+) is required as a cofactor. In terms of tissue distribution, expressed in pharyngeal, vulva and body wall muscles, intestine and several neurons.

The protein localises to the secreted. In terms of biological role, metalloprotease. This Caenorhabditis elegans protein is Zinc metalloproteinase nas-39.